The chain runs to 250 residues: 2,3-bisphosphoglycerate-dependent phosphoglycerate mutase (250 aa).

13 residues coordinate (2R)-2,3-bisphosphoglycerate: arginine 10, histidine 11, asparagine 17, glycine 24, arginine 62, glutamate 89, tyrosine 92, lysine 100, arginine 116, arginine 117, histidine 184, glycine 185, and asparagine 186. The active-site Tele-phosphohistidine intermediate is the histidine 11. Glycine 24 lines the (2R)-3-phosphoglycerate pocket. The (2R)-3-phosphoglycerate site is built by glutamate 89, tyrosine 92, lysine 100, arginine 116, and arginine 117. Glutamate 89 serves as the catalytic Proton donor/acceptor. Asparagine 186 contributes to the (2R)-3-phosphoglycerate binding site.

This sequence belongs to the phosphoglycerate mutase family. BPG-dependent PGAM subfamily. As to expression, ubiquitously expressed with the highest expression in the sub-tegumental muscle layer (at protein level). Expressed in the tegument (at protein level).

The protein resides in the tegument. The enzyme catalyses (2R)-2-phosphoglycerate = (2R)-3-phosphoglycerate. It participates in carbohydrate degradation; glycolysis; pyruvate from D-glyceraldehyde 3-phosphate: step 3/5. Its activity is regulated as follows. Strongly activated by 2,3-bisphosphoglycerate (2,3-BPG). Inhibited by vanadate in a dose-dependent manner. In terms of biological role, catalyzes interconversion of 3- and 2-phosphoglycerate with 2,3-bisphosphoglycerate (2,3-BPG) as the primer of the reaction. Schistosomula have significant surface phosphoglycerate mutase activity also without 2,3-BPG. Binds human plasminogen and enhances its conversion to active thrombolytic plasmin in the presence of human tissue plasminogen activator (tPA) in vitro. Host-interactive surface protein, which may degrade vascular blood clots surrounding the worm in vivo and thus may help survival of the parasite in its host microenvironment. The chain is 2,3-bisphosphoglycerate-dependent phosphoglycerate mutase from Schistosoma mansoni (Blood fluke).